The chain runs to 255 residues: uncharacterized protein (255 aa).

The NADP(+) site is built by Ile13, Arg37, Asp55, Asn81, Tyr148, Lys152, Val180, and Thr182. Catalysis depends on Tyr148, which acts as the Proton donor. Lys152 functions as the Lowers pKa of active site Tyr in the catalytic mechanism.

Belongs to the short-chain dehydrogenases/reductases (SDR) family.

Functionally, involved in osmoadaptation. This is an uncharacterized protein from Emericella nidulans (strain FGSC A4 / ATCC 38163 / CBS 112.46 / NRRL 194 / M139) (Aspergillus nidulans).